We begin with the raw amino-acid sequence, 662 residues long: uncharacterized protein (662 aa).

5 residues coordinate FAD: Ser-145, Glu-164, Trp-173, Asp-184, and Tyr-190. Residues 638–662 (SRLETSGVPREGVQRPGSRLRRRPS) form a disordered region.

This sequence belongs to the FAD-binding monooxygenase family. FAD serves as cofactor.

This is an uncharacterized protein from Sinorhizobium fredii (strain NBRC 101917 / NGR234).